A 36-amino-acid chain; its full sequence is Protein P4 (36 aa).

The chain crosses the membrane as a helical span at residues 13 to 33 (GLQLSLLICACLLAVLIVSFC).

The protein resides in the host membrane. This is Protein P4 from Vitis vinifera (Grape).